The following is a 502-amino-acid chain: Ribose import ATP-binding protein RbsA (502 aa).

ABC transporter domains follow at residues 3–239 and 249–493; these read VTMR…VGRE and AAPG…TGGA. ATP is bound at residue 35 to 42; the sequence is GENGAGKS.

Belongs to the ABC transporter superfamily. Ribose importer (TC 3.A.1.2.1) family. The complex is composed of an ATP-binding protein (RbsA), two transmembrane proteins (RbsC) and a solute-binding protein (RbsB).

Its subcellular location is the cell inner membrane. The enzyme catalyses D-ribose(out) + ATP + H2O = D-ribose(in) + ADP + phosphate + H(+). Part of the ABC transporter complex RbsABC involved in ribose import. Responsible for energy coupling to the transport system. The protein is Ribose import ATP-binding protein RbsA of Chromobacterium violaceum (strain ATCC 12472 / DSM 30191 / JCM 1249 / CCUG 213 / NBRC 12614 / NCIMB 9131 / NCTC 9757 / MK).